Consider the following 186-residue polypeptide: Heat shock protein 23 (186 aa).

Positions 53–161 constitute a sHSP domain; it reads VGASSGSSGA…KGNERIVQIQ (109 aa). Residues 163–186 form a disordered region; sequence VGPAHLNVKENPKEAVEQDNGNDK. Positions 169-186 are enriched in basic and acidic residues; sequence NVKENPKEAVEQDNGNDK.

The protein belongs to the small heat shock protein (HSP20) family.

The chain is Heat shock protein 23 (Hsp23) from Drosophila melanogaster (Fruit fly).